The following is a 520-amino-acid chain: FAD-linked oxidoreductase OXR2 (520 aa).

A signal peptide spans 1–23 (MKSFSLLASAGLATLASLPLTMA). N-linked (GlcNAc...) asparagine glycosylation is found at Asn77, Asn220, Asn378, and Asn390. The region spanning 79-251 (SRPTIRLVVV…TSFQSKIYPR (173 aa)) is the FAD-binding PCMH-type domain.

The protein belongs to the oxygen-dependent FAD-linked oxidoreductase family. Requires FAD as cofactor.

It functions in the pathway polyketide biosynthesis. Functionally, FAD-linked oxidoreductase; part of the gene cluster that mediates the biosynthesis of pyriculol and pyriculariol, two heptaketides that induce lesion formation upon application on rice leaves but are dispensable for pathogenicity. The highly reducing polyketide synthase synthesizes the heptaketide backbone of pyriculol and pyriculariol. Pyriculol and pyriculariol contain several hydroxyl moieties and double bonds, so it can be assumed that several reduction steps occur during biosynthesis. These reactions could be executed by PKS19 itself or partly by the tailoring enzymes OXR1, OXR2, RED1, RED2 or RED3, identified within the cluster. The FAD-linked oxidoreductase OXR1 is the only tailoring enzyme for which the function has been determined yet, and is involved in the oxidation of dihydropyriculol and dihydropyriculariol into pyriculol and pyriculariol, respectively. This Pyricularia oryzae (strain 70-15 / ATCC MYA-4617 / FGSC 8958) (Rice blast fungus) protein is FAD-linked oxidoreductase OXR2.